Reading from the N-terminus, the 263-residue chain is Stress-response A/B barrel domain-containing protein UP3 (263 aa).

Stress-response A/B barrel domains are found at residues 49–142 and 158–252; these read IEHI…AVDW and VAKL…VVEF. The Peroxisomal targeting signal motif lies at 261 to 263; the sequence is SSL.

As to quaternary structure, homodimer.

The protein resides in the peroxisome. In terms of biological role, involved in stress response. The chain is Stress-response A/B barrel domain-containing protein UP3 from Arabidopsis thaliana (Mouse-ear cress).